The sequence spans 494 residues: Putative bifunctional dihydrofolate reductase-thymidylate synthase (494 aa).

Residues 1–167 enclose the DHFR domain; it reads MGIGKDGTLP…IKHSFISFVR (167 aa). Residue 2-8 coordinates NADP(+); sequence GIGKDGT. Asp16 serves as a coordination point for substrate. NADP(+) contacts are provided by residues 40-42 and 61-64; these read RKT and LTRS. Ile103 lines the substrate pocket. Residue 104–111 coordinates NADP(+); that stretch reads GGGEILRQ. Residue Thr124 participates in substrate binding. Residues 170-494 form a thymidylate synthase region; sequence KSIAEANDSS…HHKIEMKMAV (325 aa). Arg231 provides a ligand contact to dUMP. Cys376 is a catalytic residue. DUMP contacts are provided by residues His377, 395–399, Asn407, and 437–439; these read QRSAD and HVY.

The protein in the N-terminal section; belongs to the dihydrofolate reductase family. In the C-terminal section; belongs to the thymidylate synthase family.

The enzyme catalyses (6S)-5,6,7,8-tetrahydrofolate + NADP(+) = 7,8-dihydrofolate + NADPH + H(+). The catalysed reaction is dUMP + (6R)-5,10-methylene-5,6,7,8-tetrahydrofolate = 7,8-dihydrofolate + dTMP. It functions in the pathway cofactor biosynthesis; tetrahydrofolate biosynthesis; 5,6,7,8-tetrahydrofolate from 7,8-dihydrofolate: step 1/1. Its function is as follows. Bifunctional enzyme. Involved in de novo dTMP biosynthesis. Key enzyme in folate metabolism. Can play two different roles depending on the source of dihydrofolate: de novo synthesis of tetrahydrofolate or recycling of the dihydrofolate released as one of the end products of the TS catalyzed reaction. Catalyzes an essential reaction for de novo glycine and purine synthesis, DNA precursor synthesis, and for the conversion of dUMP to dTMP. The polypeptide is Putative bifunctional dihydrofolate reductase-thymidylate synthase (Oryza sativa subsp. japonica (Rice)).